A 484-amino-acid chain; its full sequence is tRNA-2-methylthio-N(6)-dimethylallyladenosine synthase (484 aa).

One can recognise an MTTase N-terminal domain in the interval 36 to 153 (GKLYIKTHGC…LPELIRARRE (118 aa)). Residues cysteine 45, cysteine 82, cysteine 116, cysteine 190, cysteine 194, and cysteine 197 each coordinate [4Fe-4S] cluster. One can recognise a Radical SAM core domain in the interval 176 to 415 (RAEGPSAFVS…HISAHAASIS (240 aa)). The TRAM domain maps to 416-479 (QSMVGSVQRV…SNSLRGRIQL (64 aa)). Positions 428 to 450 (EGPSRRDPNELTGKSENMRPVNF) are disordered.

This sequence belongs to the methylthiotransferase family. MiaB subfamily. Monomer. [4Fe-4S] cluster serves as cofactor.

The protein resides in the cytoplasm. It catalyses the reaction N(6)-dimethylallyladenosine(37) in tRNA + (sulfur carrier)-SH + AH2 + 2 S-adenosyl-L-methionine = 2-methylsulfanyl-N(6)-dimethylallyladenosine(37) in tRNA + (sulfur carrier)-H + 5'-deoxyadenosine + L-methionine + A + S-adenosyl-L-homocysteine + 2 H(+). Its function is as follows. Catalyzes the methylthiolation of N6-(dimethylallyl)adenosine (i(6)A), leading to the formation of 2-methylthio-N6-(dimethylallyl)adenosine (ms(2)i(6)A) at position 37 in tRNAs that read codons beginning with uridine. The chain is tRNA-2-methylthio-N(6)-dimethylallyladenosine synthase from Xanthomonas oryzae pv. oryzae (strain MAFF 311018).